The following is a 638-amino-acid chain: Neuroendocrine convertase 2 (638 aa).

A signal peptide spans 1–25; sequence MKGGCVSQWKAAAGFLFCVMVFASA. A propeptide spanning residues 26–109 is cleaved from the precursor; the sequence is ERPVFTNHFL…QQEGFDRKKR (84 aa). The Peptidase S8 domain occupies 129–453; the sequence is QWYLINTGQA…YGVLDAGAMV (325 aa). Catalysis depends on charge relay system residues Asp167 and His208. Intrachain disulfides connect Cys225–Cys376 and Cys317–Cys347. N-linked (GlcNAc...) asparagine glycosylation is present at Asn375. The active-site Charge relay system is Ser384. The region spanning 461 to 597 is the P/Homo B domain; that stretch reads TVPERFHCVG…TLMLHGTQSA (137 aa). Residues Cys468 and Cys494 are joined by a disulfide bond. N-linked (GlcNAc...) asparagine glycosylation is found at Asn514 and Asn524.

It belongs to the peptidase S8 family. Furin subfamily.

It localises to the cytoplasmic vesicle. The protein localises to the secretory vesicle. Its subcellular location is the secreted. The catalysed reaction is Release of protein hormones and neuropeptides from their precursors, generally by hydrolysis of -Lys-Arg-|- bonds.. Serine endopeptidase which is involved in the processing of hormone and other protein precursors at sites comprised of pairs of basic amino acid residues. Responsible for the release of glucagon from proglucagon in pancreatic A cells. This Homo sapiens (Human) protein is Neuroendocrine convertase 2 (PCSK2).